Reading from the N-terminus, the 311-residue chain is Thioredoxin reductase (311 aa).

33 to 43 contacts FAD; sequence EGFFSGISGGQ. Cysteines 138 and 141 form a disulfide. 283-292 contacts FAD; that stretch reads DVQDKYYRQA.

This sequence belongs to the class-II pyridine nucleotide-disulfide oxidoreductase family. Homodimer. FAD is required as a cofactor.

The protein resides in the cytoplasm. The catalysed reaction is [thioredoxin]-dithiol + NADP(+) = [thioredoxin]-disulfide + NADPH + H(+). The sequence is that of Thioredoxin reductase (trxB) from Chlamydia pneumoniae (Chlamydophila pneumoniae).